We begin with the raw amino-acid sequence, 338 residues long: Heat-inducible transcription repressor HrcA (338 aa).

The protein belongs to the HrcA family.

Negative regulator of class I heat shock genes (grpE-dnaK-dnaJ and groELS operons). Prevents heat-shock induction of these operons. The sequence is that of Heat-inducible transcription repressor HrcA from Bacillus thuringiensis (strain Al Hakam).